The following is a 156-amino-acid chain: Putative pre-16S rRNA nuclease (156 aa).

Belongs to the YqgF nuclease family.

It is found in the cytoplasm. Its function is as follows. Could be a nuclease involved in processing of the 5'-end of pre-16S rRNA. The sequence is that of Putative pre-16S rRNA nuclease from Gloeobacter violaceus (strain ATCC 29082 / PCC 7421).